Consider the following 219-residue polypeptide: Guanylate kinase (219 aa).

Positions 15-194 (GLMFVLSSPS…AFAEVQSILK (180 aa)) constitute a Guanylate kinase-like domain. Residue 22-29 (SPSGAGKT) participates in ATP binding.

This sequence belongs to the guanylate kinase family.

The protein localises to the cytoplasm. It carries out the reaction GMP + ATP = GDP + ADP. Functionally, essential for recycling GMP and indirectly, cGMP. This chain is Guanylate kinase, found in Nitrobacter hamburgensis (strain DSM 10229 / NCIMB 13809 / X14).